Here is a 632-residue protein sequence, read N- to C-terminus: Golgin subfamily A member 8H (632 aa).

The segment at 1–77 (MAEETQHNKL…SSATLKDLES (77 aa)) is disordered. Coiled coils occupy residues 110–201 (VEHQ…LSSR) and 240–468 (ECAE…EKAD). Composition is skewed to basic and acidic residues over residues 352–362 (KQEERIQEQHK) and 427–440 (HGGE…EEAP). Disordered stretches follow at residues 352–379 (KQEE…EPNN), 423–452 (PGEG…DPES), and 496–524 (LSEP…DEGE). Gly residues predominate over residues 508–520 (LGGGHHQAGAQGG).

The protein belongs to the GOLGA8 family.

In Homo sapiens (Human), this protein is Golgin subfamily A member 8H (GOLGA8H).